The sequence spans 303 residues: Mycothiol acetyltransferase (303 aa).

2 consecutive N-acetyltransferase domains span residues 4 to 141 (ITVR…RSLA) and 154 to 303 (IVLR…ANGA). Residue E38 participates in 1D-myo-inositol 2-(L-cysteinylamino)-2-deoxy-alpha-D-glucopyranoside binding. Residue 80-82 (AAV) participates in acetyl-CoA binding. Residues E181, K223, and E234 each contribute to the 1D-myo-inositol 2-(L-cysteinylamino)-2-deoxy-alpha-D-glucopyranoside site. Acetyl-CoA-binding positions include 238–240 (VGI) and 245–251 (QGRGLGR). Position 272 (Y272) interacts with 1D-myo-inositol 2-(L-cysteinylamino)-2-deoxy-alpha-D-glucopyranoside. Acetyl-CoA is bound at residue 277-282 (NTAAVN).

The protein belongs to the acetyltransferase family. MshD subfamily. As to quaternary structure, monomer.

The catalysed reaction is 1D-myo-inositol 2-(L-cysteinylamino)-2-deoxy-alpha-D-glucopyranoside + acetyl-CoA = mycothiol + CoA + H(+). In terms of biological role, catalyzes the transfer of acetyl from acetyl-CoA to desacetylmycothiol (Cys-GlcN-Ins) to form mycothiol. In Nocardia farcinica (strain IFM 10152), this protein is Mycothiol acetyltransferase.